A 53-amino-acid polypeptide reads, in one-letter code: IgA-inducing protein homolog (53 aa).

Positions 1 to 30 (MCSYYHMKKRSVSGCNITIFAVMFSHLSAG) are cleaved as a signal peptide.

It localises to the secreted. Enhances IgA secretion from B-cells stimulated via CD40. The sequence is that of IgA-inducing protein homolog (IGIP) from Homo sapiens (Human).